A 355-amino-acid polypeptide reads, in one-letter code: NAD-dependent protein deacylase sirtuin-6 (355 aa).

S2 carries the post-translational modification N-acetylserine. A Phosphoserine; by MAPK8 modification is found at S10. Residues 27–272 form the Deacetylase sirtuin-type domain; sequence PEELERKVWE…TRLMKHLGLE (246 aa). An N6-acetyllysine modification is found at K33. Residues A53, T57, F64, R65, W71, Q113, and H133 each contribute to the NAD(+) site. The active-site Proton acceptor is the H133. The Zn(2+) site is built by C141, C144, and C166. Residue K170 forms a Glycyl lysine isopeptide (Lys-Gly) (interchain with G-Cter in ubiquitin) linkage. C177 provides a ligand contact to Zn(2+). NAD(+)-binding residues include G214, S216, N240, Q242, and V258. Residues 284–355 are disordered; it reads RALPPLPRPP…KRVKAKAVPS (72 aa). A compositionally biased stretch (pro residues) spans 287–296; that stretch reads PPLPRPPTPK. The residue at position 294 (T294) is a Phosphothreonine. 2 positions are modified to phosphoserine: S303 and S330. The segment covering 343–355 has biased composition (basic residues); the sequence is RPPKRVKAKAVPS.

Belongs to the sirtuin family. Class IV subfamily. As to quaternary structure, homodimer; binds to nucleosomes and DNA ends as a homodimer. Interacts with RELA; interferes with RELA binding to target DNA. Interacts with SMARCA5; promoting recruitment of SMARCA5/SNF2H to double-strand breaks (DSBs) sites. Interacts with the mTORC2 complex; preventing the ability of SIRT6 to deacetylate FOXO1. Interacts with the CLOCK-BMAL1 complex; recruited by the CLOCK-BMAL1 complex to regulate expression of clock-controlled genes. Interacts with CSNK2A2; preventing CSNK2A2 localization to the nucleus. In terms of assembly, (Microbial infection) Interacts with Kaposi's sarcoma-associated herpesvirus protein VIRF-1; this interaction prevents SIRT6 deubiquitination by USP10. Requires Zn(2+) as cofactor. In terms of processing, acetylated at Lys-33. Deacetylation at Lys-33 by SIRT1 promotes homomultimerization and binding to double-strand breaks (DSBs) sites. Post-translationally, phosphorylation at Ser-10 by MAPK8/JNK1 in response to oxidative stress stimulates the mono-ADP-ribosyltransferase activity on PARP1, leading to PARP1 recruitment to double-strand breaks (DSBs). Monoubiquitinated at Lys-170 by STUB1/CHIP, preventing its degradation by the proteasome. Deubiquitinated by USP10, also preventing its degradation by the proteasome. In terms of processing, sumoylated, leading to specifically decrease ability to deacetylate histone H3 at 'Lys-56' (H3K56ac).

It is found in the nucleus. The protein resides in the chromosome. The protein localises to the telomere. It localises to the endoplasmic reticulum. It catalyses the reaction N(6)-acetyl-L-lysyl-[protein] + NAD(+) + H2O = 2''-O-acetyl-ADP-D-ribose + nicotinamide + L-lysyl-[protein]. It carries out the reaction N(6)-tetradecanoyl-L-lysyl-[protein] + NAD(+) + H2O = 2''-O-tetradecanoyl-ADP-D-ribose + nicotinamide + L-lysyl-[protein]. The enzyme catalyses N(6)-hexadecanoyl-L-lysyl-[protein] + NAD(+) + H2O = 2''-O-hexadecanoyl-ADP-D-ribose + nicotinamide + L-lysyl-[protein]. The catalysed reaction is L-lysyl-[protein] + NAD(+) = N(6)-(ADP-D-ribosyl)-L-lysyl-[protein] + nicotinamide + H(+). It catalyses the reaction L-arginyl-[protein] + NAD(+) = N(omega)-(ADP-D-ribosyl)-L-arginyl-[protein] + nicotinamide + H(+). Its activity is regulated as follows. Compared to the defatty-acylase activity, the protein deacetylase activity is weak in vitro, and requires activation. The histone deacetylase activity is strongly activated upon binding to nucleosomes and chromatin in vivo. Two molecules of SIRT6 associate with the acidic patch of one nucleosome, while the C-terminal disordered region of SIRT6 associates with nucleosomal DNA, leading to efficient histone deacetylation. The protein-lysine deacetylase activity is also activated by long-chain free fatty-acids. The histone deacetylase activity is specifically repressed by long non-coding RNA lncPRESS1, which binds to SIRT6 and prevents chromatin-binding, thereby promoting stem cell pluripotency. Due to its essential role as tumor suppressor and involvement in DNA repair and life span, extensive research is made for the identification of small compound regulators of SIRT6. Nitro-fatty acids (nitro-oleic acid and nitro-conjugated linoleic acid) strongly stimulate the protein-lysine deacetylase activity by forming a covalent Michael adduct formation with Cys-18. Activated by UBCS039 (4-(pyridin-3-yl)-4,5- dihydropyrrolo[1,2-a]quinoxaline). Inhibited by non-selective hydroxamate trichostatin A inhibitor. Deacetylase activity is activated by fluvastatin and quercetin-based compounds. The protein-lysine deacetylase activity, but not the defatty-acylase activity, is specifically activated by MDL-800 and MDL-801 activators in vivo, enhancing the histone deacetylase and tumor suppressor activities. MDL-800 and MDL-801 selectively activate SIRT6 and not other members of the sirtuin family. The binding-mode of MDL-801 is however subject to discussion. Its function is as follows. NAD-dependent protein deacetylase, deacylase and mono-ADP-ribosyltransferase that plays an essential role in DNA damage repair, telomere maintenance, metabolic homeostasis, inflammation, tumorigenesis and aging. Displays protein-lysine deacetylase or defatty-acylase (demyristoylase and depalmitoylase) activity, depending on the context. Acts as a key histone deacetylase by catalyzing deacetylation of histone H3 at 'Lys-9', 'Lys-18' and 'Lys-56' (H3K9ac, H3K18ac and H3K56ac, respectively), suppressing target gene expression of several transcription factors, including NF-kappa-B. Acts as an inhibitor of transcription elongation by mediating deacetylation of H3K9ac and H3K56ac, preventing release of NELFE from chromatin and causing transcriptional pausing. Involved in DNA repair by promoting double-strand break (DSB) repair: acts as a DSB sensor by recognizing and binding DSB sites, leading to (1) recruitment of DNA repair proteins, such as SMARCA5/SNF2H, and (2) deacetylation of histone H3K9ac and H3K56ac. SIRT6 participation to DSB repair is probably involved in extension of life span. Also promotes DNA repair by deacetylating non-histone proteins, such as DDB2 and p53/TP53. Specifically deacetylates H3K18ac at pericentric heterochromatin, thereby maintaining pericentric heterochromatin silencing at centromeres and protecting against genomic instability and cellular senescence. Involved in telomere maintenance by catalyzing deacetylation of histone H3 in telomeric chromatin, regulating telomere position effect and telomere movement in response to DNA damage. Required for embryonic stem cell differentiation by mediating histone deacetylation of H3K9ac. Plays a major role in metabolism by regulating processes such as glycolysis, gluconeogenesis, insulin secretion and lipid metabolism. Inhibits glycolysis via histone deacetylase activity and by acting as a corepressor of the transcription factor HIF1A, thereby controlling the expression of multiple glycolytic genes. Has tumor suppressor activity by repressing glycolysis, thereby inhibiting the Warburg effect. Also regulates glycolysis and tumorigenesis by mediating deacetylation and nuclear export of non-histone proteins, such as isoform M2 of PKM (PKM2). Acts as a negative regulator of gluconeogenesis by mediating deacetylation of non-histone proteins, such as FOXO1 and KAT2A/GCN5. Promotes beta-oxidation of fatty acids during fasting by catalyzing deacetylation of NCOA2, inducing coactivation of PPARA. Acts as a regulator of lipid catabolism in brown adipocytes, both by catalyzing deacetylation of histones and non-histone proteins, such as FOXO1. Also acts as a regulator of circadian rhythms, both by regulating expression of clock-controlled genes involved in lipid and carbohydrate metabolism, and by catalyzing deacetylation of PER2. The defatty-acylase activity is specifically involved in regulation of protein secretion. Has high activity toward long-chain fatty acyl groups and mediates protein-lysine demyristoylation and depalmitoylation of target proteins, such as RRAS2 and TNF, thereby regulating their secretion. Also acts as a mono-ADP-ribosyltransferase by mediating mono-ADP-ribosylation of PARP1, TRIM28/KAP1 or SMARCC2/BAF170. Mono-ADP-ribosyltransferase activity is involved in DNA repair, cellular senescence, repression of LINE-1 retrotransposon elements and regulation of transcription. In Homo sapiens (Human), this protein is NAD-dependent protein deacylase sirtuin-6.